We begin with the raw amino-acid sequence, 71 residues long: MMFRLTSVGCILLVIAFLNLVGLTNACTSEGYSCSSDSNCCKNVCCWNVCESHCRHPGKRTRLQGFFKHRR.

The signal sequence occupies residues methionine 1–alanine 26. Disulfide bonds link cysteine 27-cysteine 41, cysteine 34-cysteine 46, cysteine 40-cysteine 50, and cysteine 45-cysteine 54. Position 57 is a proline amide (proline 57). A propeptide spanning residues threonine 61–arginine 71 is cleaved from the precursor.

Belongs to the conotoxin I2 superfamily. As to expression, expressed by the venom duct.

The protein localises to the secreted. Probable neurotoxin. This is Conotoxin Lt11.3 from Conus litteratus (Lettered cone).